Consider the following 233-residue polypeptide: Cilia- and flagella-associated protein 299 (233 aa).

In terms of tissue distribution, abundantly expressed in testis, specifically in spermatogonia and primary spermatocytes but not in secondary spermatocytes and spermatids.

It localises to the cytoplasm. The protein localises to the nucleus. Its function is as follows. May be involved in spermatogenesis. This is Cilia- and flagella-associated protein 299 from Mus musculus (Mouse).